The primary structure comprises 239 residues: Sugar fermentation stimulation protein homolog (239 aa).

Belongs to the SfsA family.

This is Sugar fermentation stimulation protein homolog from Microcystis aeruginosa (strain NIES-843 / IAM M-2473).